The primary structure comprises 264 residues: ATP synthase subunit a (264 aa).

A run of 5 helical transmembrane segments spans residues 39–59 (LDTL…FYIV), 97–117 (VAPL…MDLV), 139–159 (TADP…VIFY), 205–225 (LFGN…LPWW), and 239–259 (LLVI…YISL).

Belongs to the ATPase A chain family. As to quaternary structure, F-type ATPases have 2 components, CF(1) - the catalytic core - and CF(0) - the membrane proton channel. CF(1) has five subunits: alpha(3), beta(3), gamma(1), delta(1), epsilon(1). CF(0) has three main subunits: a(1), b(2) and c(9-12). The alpha and beta chains form an alternating ring which encloses part of the gamma chain. CF(1) is attached to CF(0) by a central stalk formed by the gamma and epsilon chains, while a peripheral stalk is formed by the delta and b chains.

It localises to the cell inner membrane. Key component of the proton channel; it plays a direct role in the translocation of protons across the membrane. This Coxiella burnetii (strain Dugway 5J108-111) protein is ATP synthase subunit a.